A 247-amino-acid chain; its full sequence is ATP synthase subunit a, chloroplastic (247 aa).

The next 5 helical transmembrane spans lie at 38–58 (QVLITSWVVIAILLGSVIIAV), 95–115 (VPFIGTMFLFIFVSNWSGALL), 134–154 (INTTVALALPTSVAYFYAGLT), 199–219 (LVVVVLVSLVPSLVPIPVMFL), and 220–240 (GLFTSGIQALIFATLAAAYIG).

Belongs to the ATPase A chain family. As to quaternary structure, F-type ATPases have 2 components, CF(1) - the catalytic core - and CF(0) - the membrane proton channel. CF(1) has five subunits: alpha(3), beta(3), gamma(1), delta(1), epsilon(1). CF(0) has four main subunits: a, b, b' and c.

It is found in the plastid. The protein resides in the chloroplast thylakoid membrane. In terms of biological role, key component of the proton channel; it plays a direct role in the translocation of protons across the membrane. The sequence is that of ATP synthase subunit a, chloroplastic from Dioscorea elephantipes (Elephant's foot yam).